The primary structure comprises 328 residues: Global transcription regulator sge1 (328 aa).

Disordered stretches follow at residues 94–120 (PGEK…PRQR) and 251–293 (QMHQ…QYVH). 3 stretches are compositionally biased toward low complexity: residues 106–116 (KSTTQSGGISK), 251–261 (QMHQPQVHQPL), and 282–293 (AHQPQVHQQYVH).

The protein belongs to the MIT1/WOR1 family.

Its subcellular location is the nucleus. Its function is as follows. Global transcriptional regulator of transcription that impacts, but is not absolutely required for secondary metabolism and pathogenicity on maize. Regulates synthesis of multiple secondary metabolites, including fumonisins and fusarins. This Gibberella moniliformis (strain M3125 / FGSC 7600) (Maize ear and stalk rot fungus) protein is Global transcription regulator sge1.